Here is a 96-residue protein sequence, read N- to C-terminus: MKTTLIAAAIVALSGLAAPALAYDGTKCKAAGNCWEPKPGFPEKIAGSKYDPKHDPKELNKQADSIKQMEERNKKRVENFKKTGKFEYDVAKISAN.

The first 22 residues, 1-22 (MKTTLIAAAIVALSGLAAPALA), serve as a signal peptide directing secretion. A disulfide bond links Cys28 and Cys34. A disordered region spans residues 45–75 (IAGSKYDPKHDPKELNKQADSIKQMEERNKK). The segment covering 50–61 (YDPKHDPKELNK) has biased composition (basic and acidic residues).

Belongs to the methanol dehydrogenase subunit 2 family. As to quaternary structure, heterotetramer composed of 2 alpha and 2 beta subunits.

It localises to the periplasm. It catalyses the reaction 2 Fe(III)-[cytochrome cL] + a primary alcohol = 2 Fe(II)-[cytochrome cL] + an aldehyde + 2 H(+). Its function is as follows. Catalyzes the oxidation of primary alcohols including methanol. In Methylorubrum extorquens (strain ATCC 14718 / DSM 1338 / JCM 2805 / NCIMB 9133 / AM1) (Methylobacterium extorquens), this protein is Methanol dehydrogenase [cytochrome c] subunit 2 (moxI).